Consider the following 98-residue polypeptide: PqqA binding protein (98 aa).

Belongs to the PqqD family. As to quaternary structure, monomer. Interacts with PqqE.

Its pathway is cofactor biosynthesis; pyrroloquinoline quinone biosynthesis. Functions as a PqqA binding protein and presents PqqA to PqqE, in the pyrroloquinoline quinone (PQQ) biosynthetic pathway. The chain is PqqA binding protein from Pseudomonas syringae pv. tomato (strain ATCC BAA-871 / DC3000).